The sequence spans 545 residues: 2-oxo-Delta(3)-4,5,5-trimethylcyclopentenylacetyl-CoA monooxygenase (545 aa).

Residues threonine 20, glutamate 39, 47 to 50 (TWYW), 59 to 60 (DT), tyrosine 65, and valine 112 each bind FAD. 57 to 59 (RLD) is an NADP(+) binding site. NADP(+) is bound by residues 193–199 (TGATGVQ) and 216–217 (RT). FAD is bound at residue valine 446. Tryptophan 501 serves as a coordination point for NADP(+).

It belongs to the FAD-binding monooxygenase family. Homodimer. FAD serves as cofactor.

It catalyses the reaction [(1R)-2,2,3-trimethyl-5-oxocyclopent-3-enyl]acetyl-CoA + NADPH + O2 + H(+) = [(2R)-3,3,4-trimethyl-6-oxo-3,6-dihydro-1H-pyran-2-yl]acetyl-CoA + NADP(+) + H2O. It participates in terpene metabolism; (R)-camphor degradation. Its function is as follows. Involved in the degradation of (+)-camphor. Catalyzes the lactonization of 2-oxo-delta(3)-4,5, 5-trimethylcyclopentenylacetyl-CoA (OT-CoA), a key intermediate in the metabolism of camphor. 2-Oxocyclopentyl ethyl acetate is also a good substrate, as is 2-oxocyclohexyl ethyl acetate and methyl-substituted cyclohexanones, but free acid is a poor substrate. The sequence is that of 2-oxo-Delta(3)-4,5,5-trimethylcyclopentenylacetyl-CoA monooxygenase (otemo) from Pseudomonas putida (Arthrobacter siderocapsulatus).